A 350-amino-acid chain; its full sequence is GTP 3',8-cyclase (350 aa).

The Radical SAM core domain maps to 27–245 (TFGRIATDLR…LRAHFTLVPD (219 aa)). A GTP-binding site is contributed by Arg36. Cys43 and Cys47 together coordinate [4Fe-4S] cluster. S-adenosyl-L-methionine is bound at residue Tyr49. Cys50 lines the [4Fe-4S] cluster pocket. Position 87 (Arg87) interacts with GTP. Gly91 contributes to the S-adenosyl-L-methionine binding site. Residue Thr118 participates in GTP binding. Ser142 lines the S-adenosyl-L-methionine pocket. Lys179 lines the GTP pocket. Position 213 (Met213) interacts with S-adenosyl-L-methionine. [4Fe-4S] cluster-binding residues include Cys277 and Cys280. 282-284 (RTR) contacts GTP. Position 294 (Cys294) interacts with [4Fe-4S] cluster.

The protein belongs to the radical SAM superfamily. MoaA family. As to quaternary structure, monomer and homodimer. The cofactor is [4Fe-4S] cluster.

It catalyses the reaction GTP + AH2 + S-adenosyl-L-methionine = (8S)-3',8-cyclo-7,8-dihydroguanosine 5'-triphosphate + 5'-deoxyadenosine + L-methionine + A + H(+). The protein operates within cofactor biosynthesis; molybdopterin biosynthesis. Catalyzes the cyclization of GTP to (8S)-3',8-cyclo-7,8-dihydroguanosine 5'-triphosphate. In Mycobacterium sp. (strain JLS), this protein is GTP 3',8-cyclase.